The chain runs to 391 residues: tRNA(Met) cytidine acetate ligase (391 aa).

ATP contacts are provided by residues 7–20 (IAEY…HIYQ), Gly101, Asn153, and Arg178.

The protein belongs to the TmcAL family.

Its subcellular location is the cytoplasm. It catalyses the reaction cytidine(34) in elongator tRNA(Met) + acetate + ATP = N(4)-acetylcytidine(34) in elongator tRNA(Met) + AMP + diphosphate. Functionally, catalyzes the formation of N(4)-acetylcytidine (ac(4)C) at the wobble position of elongator tRNA(Met), using acetate and ATP as substrates. First activates an acetate ion to form acetyladenylate (Ac-AMP) and then transfers the acetyl group to tRNA to form ac(4)C34. The polypeptide is tRNA(Met) cytidine acetate ligase (Latilactobacillus sakei subsp. sakei (strain 23K) (Lactobacillus sakei subsp. sakei)).